A 328-amino-acid chain; its full sequence is Beta-ketoacyl-[acyl-carrier-protein] synthase III (328 aa).

Active-site residues include C122 and H255. Residues 256–260 are ACP-binding; that stretch reads QANIR. N285 is an active-site residue.

Belongs to the thiolase-like superfamily. FabH family. As to quaternary structure, homodimer.

It is found in the cytoplasm. The enzyme catalyses malonyl-[ACP] + acetyl-CoA + H(+) = 3-oxobutanoyl-[ACP] + CO2 + CoA. It functions in the pathway lipid metabolism; fatty acid biosynthesis. Catalyzes the condensation reaction of fatty acid synthesis by the addition to an acyl acceptor of two carbons from malonyl-ACP. Catalyzes the first condensation reaction which initiates fatty acid synthesis and may therefore play a role in governing the total rate of fatty acid production. Possesses both acetoacetyl-ACP synthase and acetyl transacylase activities. Its substrate specificity determines the biosynthesis of branched-chain and/or straight-chain of fatty acids. The sequence is that of Beta-ketoacyl-[acyl-carrier-protein] synthase III from Polynucleobacter necessarius subsp. necessarius (strain STIR1).